Here is a 77-residue protein sequence, read N- to C-terminus: Conotoxin PnMEKL-04 (77 aa).

The signal sequence occupies residues 1 to 19 (MEKLTILLLVAAVLMSTQA). Residues 20 to 45 (LPQGGGENRLKENIKFLLKRKTAADR) constitute a propeptide that is removed on maturation. Disulfide bonds link cysteine 51-cysteine 65, cysteine 58-cysteine 69, and cysteine 64-cysteine 73.

It belongs to the conotoxin O2 superfamily. Expressed by the venom duct.

The protein resides in the secreted. This Conus pennaceus (Feathered cone) protein is Conotoxin PnMEKL-04.